A 1174-amino-acid chain; its full sequence is Tyrosine-protein phosphatase non-receptor type 21 (1174 aa).

An FERM domain is found at 23–308; it reads LVARIQLLNN…ARHKFYRLNQ (286 aa). Residues 396–423 are compositionally biased toward polar residues; that stretch reads SAHSTNSLNNPQPYLQPSPMSSNPSITG. Positions 396–445 are disordered; the sequence is SAHSTNSLNNPQPYLQPSPMSSNPSITGSDVMRPDYLPSHRHSAVIPPSY. 5 positions are modified to phosphoserine: S577, S589, S590, S637, and S673. The tract at residues 673 to 692 is disordered; that stretch reads SQPSVFTERTQREGPEEAEG. Over residues 681 to 692 the composition is skewed to basic and acidic residues; that stretch reads RTQREGPEEAEG. Phosphoserine is present on residues S710 and S711. Disordered stretches follow at residues 711-745 and 769-806; these read SEEEEDEDFEEESGARAPPARAREPRPGLAQDPPG and KRMMDSSPVRTTAEAQRPWRDGLLMPSMSESDLTTSGR. Residues 712–722 are compositionally biased toward acidic residues; it reads EEEEDEDFEEE. The span at 796 to 805 shows a compositional bias: polar residues; it reads MSESDLTTSG. 3 positions are modified to phosphoserine: S797, S799, and S804. Positions 896-1167 constitute a Tyrosine-protein phosphatase domain; that stretch reads VFTEYERILK…TFVYRVLIQF (272 aa). Substrate-binding positions include E1067, 1108 to 1114, and Q1152; that span reads CSAGVGR. C1108 functions as the Phosphocysteine intermediate in the catalytic mechanism.

It belongs to the protein-tyrosine phosphatase family. Non-receptor class subfamily.

It localises to the cytoplasm. It is found in the cytoskeleton. The catalysed reaction is O-phospho-L-tyrosyl-[protein] + H2O = L-tyrosyl-[protein] + phosphate. This Homo sapiens (Human) protein is Tyrosine-protein phosphatase non-receptor type 21 (PTPN21).